A 104-amino-acid polypeptide reads, in one-letter code: Large ribosomal subunit protein bL21 (104 aa).

Belongs to the bacterial ribosomal protein bL21 family. As to quaternary structure, part of the 50S ribosomal subunit. Contacts protein L20.

Its function is as follows. This protein binds to 23S rRNA in the presence of protein L20. The protein is Large ribosomal subunit protein bL21 of Acidiphilium cryptum (strain JF-5).